The primary structure comprises 148 residues: Deoxyuridine 5'-triphosphate nucleotidohydrolase (148 aa).

Residues 68–70, Asn-81, 85–87, and Lys-95 each bind substrate; these read RSG and TID.

It belongs to the dUTPase family. The cofactor is Mg(2+).

It catalyses the reaction dUTP + H2O = dUMP + diphosphate + H(+). It functions in the pathway pyrimidine metabolism; dUMP biosynthesis; dUMP from dCTP (dUTP route): step 2/2. In terms of biological role, this enzyme is involved in nucleotide metabolism: it produces dUMP, the immediate precursor of thymidine nucleotides and it decreases the intracellular concentration of dUTP so that uracil cannot be incorporated into DNA. In Rickettsia akari (strain Hartford), this protein is Deoxyuridine 5'-triphosphate nucleotidohydrolase.